Here is a 218-residue protein sequence, read N- to C-terminus: Hypoxanthine-guanine phosphoribosyltransferase (218 aa).

At A2 the chain carries N-acetylalanine. Residue K69 participates in GMP binding. The residue at position 103 (K103) is an N6-acetyllysine. K115 participates in a covalent cross-link: Glycyl lysine isopeptide (Lys-Gly) (interchain with G-Cter in SUMO1); alternate. K115 participates in a covalent cross-link: Glycyl lysine isopeptide (Lys-Gly) (interchain with G-Cter in SUMO2); alternate. Residues 134 to 142 (EDIIDTGKT), K166, 186 to 188 (KFV), and D194 contribute to the GMP site. D138 functions as the Proton acceptor in the catalytic mechanism. Position 142 is a phosphothreonine (T142). Residue D194 participates in Mg(2+) binding.

Belongs to the purine/pyrimidine phosphoribosyltransferase family. In terms of assembly, homotetramer. It depends on Mg(2+) as a cofactor.

The protein resides in the cytoplasm. It carries out the reaction IMP + diphosphate = hypoxanthine + 5-phospho-alpha-D-ribose 1-diphosphate. It catalyses the reaction GMP + diphosphate = guanine + 5-phospho-alpha-D-ribose 1-diphosphate. The protein operates within purine metabolism; IMP biosynthesis via salvage pathway; IMP from hypoxanthine: step 1/1. In terms of biological role, converts guanine to guanosine monophosphate, and hypoxanthine to inosine monophosphate. Transfers the 5-phosphoribosyl group from 5-phosphoribosylpyrophosphate onto the purine. Plays a central role in the generation of purine nucleotides through the purine salvage pathway. The protein is Hypoxanthine-guanine phosphoribosyltransferase (HPRT1) of Homo sapiens (Human).